The primary structure comprises 320 residues: Malate dehydrogenase (320 aa).

NAD(+)-binding positions include 10-15 (GAGQIG) and Asp34. Residues Arg83 and Arg89 each contribute to the substrate site. NAD(+) contacts are provided by residues Asn96 and 119-121 (ITN). Residues Asn121 and Arg152 each coordinate substrate. The active-site Proton acceptor is the His176.

It belongs to the LDH/MDH superfamily. MDH type 3 family.

The enzyme catalyses (S)-malate + NAD(+) = oxaloacetate + NADH + H(+). Functionally, catalyzes the reversible oxidation of malate to oxaloacetate. In Methylobacterium nodulans (strain LMG 21967 / CNCM I-2342 / ORS 2060), this protein is Malate dehydrogenase.